Here is an 86-residue protein sequence, read N- to C-terminus: High affinity immunoglobulin epsilon receptor subunit gamma (86 aa).

The signal sequence occupies residues 1-18; sequence MIPAVILFLLLLVEEAAA. Topologically, residues 19 to 23 are extracellular; the sequence is LGEPQ. A helical membrane pass occupies residues 24 to 44; it reads LCYILDAILFLYGIVLTLLYC. Residues 45 to 86 are Cytoplasmic-facing; it reads RLKIQVRKADIASREKSDAVYTGLNTRNQETYETLKHEKPPQ. In terms of domain architecture, ITAM spans 54 to 82; that stretch reads DIASREKSDAVYTGLNTRNQETYETLKHE. Residues Y65 and Y76 each carry the phosphotyrosine modification. Phosphothreonine is present on T78.

It belongs to the CD3Z/FCER1G family. In terms of assembly, igE Fc receptor is a tetramer of an alpha chain, a beta chain, and two disulfide linked gamma chains. Associates with FCGR1A to form a functional receptor complex. The signaling subunit of immunoglobulin gamma (IgG) Fc receptor complex. As a homodimer or a heterodimer of CD247 and FCER1G, associates with the ligand binding subunit FCGR3A to form a functional receptor complex. Associates with CLEC6A. Interacts with CLEC4E. Interacts (via ITAM domain) with SYK (via SH2 domains); activates SYK, enabling integrin-mediated activation of neutrophils and macrophages. Interacts with common beta chain of interleukin 3 receptor CSF2RB and recruits SYK in response to IL3 stimulation; this interaction is direct. Interacts with CD300LH; the interaction may be indirect. Interacts with CD300LD. Interacts with TARM1. In terms of tissue distribution, expressed in leukocytes and pinealocytes. Expression in the pineal gland does not undergo circadian variations.

It is found in the cell membrane. Functionally, adapter protein containing an immunoreceptor tyrosine-based activation motif (ITAM) that transduces activation signals from various immunoreceptors. As a component of the high-affinity immunoglobulin E (IgE) receptor, mediates allergic inflammatory signaling in mast cells. As a constitutive component of interleukin-3 receptor complex, selectively mediates interleukin 4/IL4 production by basophils priming T-cells toward effector T-helper 2 subset. Associates with pattern recognition receptors CLEC4D and CLEC4E to form a functional signaling complex in myeloid cells. Binding of mycobacterial trehalose 6,6'-dimycolate (TDM) to this receptor complex leads to phosphorylation of ITAM, triggering activation of SYK, CARD9 and NF-kappa-B, consequently driving maturation of antigen-presenting cells and shaping antigen-specific priming of T-cells toward effector T-helper 1 and T-helper 17 cell subtypes. May function cooperatively with other activating receptors. Functionally linked to integrin beta-2/ITGB2-mediated neutrophil activation. Also involved in integrin alpha-2/ITGA2-mediated platelet activation. The sequence is that of High affinity immunoglobulin epsilon receptor subunit gamma (Fcer1g) from Rattus norvegicus (Rat).